The sequence spans 98 residues: (4S)-4-hydroxy-5-phosphonooxypentane-2,3-dione isomerase (98 aa).

Residues 2 to 91 (NVTLVEINIK…MSQPRQKRSF (90 aa)) form the ABM domain.

It belongs to the LsrG family. As to quaternary structure, homodimer.

It localises to the cytoplasm. The enzyme catalyses (2S)-2-hydroxy-3,4-dioxopentyl phosphate = 3-hydroxy-2,4-dioxopentyl phosphate. Functionally, involved in the degradation of phospho-AI-2, thereby terminating induction of the lsr operon and closing the AI-2 signaling cycle. Catalyzes the conversion of (4S)-4-hydroxy-5-phosphonooxypentane-2,3-dione (P-DPD) to 3-hydroxy-5-phosphonooxypentane-2,4-dione (P-HPD). In Klebsiella pneumoniae subsp. pneumoniae (strain ATCC 700721 / MGH 78578), this protein is (4S)-4-hydroxy-5-phosphonooxypentane-2,3-dione isomerase.